The sequence spans 177 residues: Tubulin beta chain (177 aa).

The tract at residues 156-177 (YQDATAEEEGEFDEEEGDEEAA) is disordered. Residues 160-177 (TAEEEGEFDEEEGDEEAA) show a composition bias toward acidic residues.

It belongs to the tubulin family. In terms of assembly, dimer of alpha and beta chains. A typical microtubule is a hollow water-filled tube with an outer diameter of 25 nm and an inner diameter of 15 nM. Alpha-beta heterodimers associate head-to-tail to form protofilaments running lengthwise along the microtubule wall with the beta-tubulin subunit facing the microtubule plus end conferring a structural polarity. Microtubules usually have 13 protofilaments but different protofilament numbers can be found in some organisms and specialized cells. The cofactor is Mg(2+).

The protein localises to the cytoplasm. The protein resides in the cytoskeleton. Its function is as follows. Tubulin is the major constituent of microtubules, a cylinder consisting of laterally associated linear protofilaments composed of alpha- and beta-tubulin heterodimers. Microtubules grow by the addition of GTP-tubulin dimers to the microtubule end, where a stabilizing cap forms. Below the cap, tubulin dimers are in GDP-bound state, owing to GTPase activity of alpha-tubulin. The chain is Tubulin beta chain from Lytechinus pictus (Painted sea urchin).